Consider the following 391-residue polypeptide: Yellow-related salivary protein ASP4 (391 aa).

The first 18 residues, methionine 1 to alanine 18, serve as a signal peptide directing secretion. Asparagine 29 is a glycosylation site (N-linked (GlcNAc...) asparagine).

The protein belongs to the major royal jelly protein family. In terms of tissue distribution, female salivary gland (at protein level).

It is found in the secreted. Functionally, probably modulates blood feeding of sand flies on vertebrate species by binding and sequestering different mediators involved in the host response. Binds biogenic amines. Binds serotonin and dopamine with high affinity. Binds adrenaline, octopamine and adrenaline with medium affinity. Binds histamine with low affinity. This Phlebotomus orientalis (Phlebotomine sand fly) protein is Yellow-related salivary protein ASP4.